A 699-amino-acid chain; its full sequence is SHC SH2 domain-binding protein 1 homolog A (699 aa).

PbH1 repeat units follow at residues serine 480–proline 502, glycine 503–aspartate 524, and isoleucine 532–lysine 554. Positions alanine 603–glutamate 627 form a coiled coil.

Its subcellular location is the midbody. The protein localises to the cytoplasm. It is found in the cytoskeleton. It localises to the spindle. Functionally, may play a role in signaling pathways governing cellular proliferation. The polypeptide is SHC SH2 domain-binding protein 1 homolog A (shcbp1-a) (Xenopus laevis (African clawed frog)).